Reading from the N-terminus, the 1298-residue chain is Major viral transcription factor ICP4 (1298 aa).

Disordered stretches follow at residues 1–82 (MASE…VSPR), 94–291 (AVRT…PRRV), 534–554 (PASPAGGDDPDAARHADADDD), 594–620 (AGARPASPPRPEGPAGPASPPPPHADA), 718–826 (AASA…HTAA), and 877–904 (PAAQAACGGGDDDDNPHPHGAAGGRLFG). A compositionally biased stretch (pro residues) spans 11–23 (SPGPTDGPPPTPS). Residues 37–47 (ETEEGGDDPDH) are compositionally biased toward acidic residues. Positions 48–63 (DPDHPHDLDDARRDGR) are enriched in basic and acidic residues. Over residues 100–110 (TPDPAASPPRT) the composition is skewed to pro residues. Over residues 116-127 (DDDDGDEYDDAA) the composition is skewed to acidic residues. Basic and acidic residues predominate over residues 130–144 (AGDRAPARGREREAP). Residues 174-198 (RPSASSTSSDSGSSSSSSASSSSSS) show a composition bias toward low complexity. Acidic residues predominate over residues 199 to 209 (SDEDEDDDGND). Residues 210–219 (AADHAREARA) are compositionally biased toward basic and acidic residues. The segment covering 222–233 (RGPSSAAPAAPG) has biased composition (low complexity). A compositionally biased stretch (pro residues) spans 234-244 (RTPPPPGPPPL). Composition is skewed to low complexity over residues 245–263 (SEAAPKPRAAARTPAASAG) and 272–282 (AAVAGRDATGR). The DNA-binding element occupies 262 to 490 (AGRIERRRAR…ENAALTGAAG (229 aa)). A compositionally biased stretch (basic and acidic residues) spans 544–554 (DAARHADADDD). Pro residues-rich tracts occupy residues 599–618 (ASPPRPEGPAGPASPPPPHA) and 764–783 (LPAPAPPSTPPGPEPAPAQP). The segment covering 784–802 (AAPRAAAAQARPRPVAVSR) has biased composition (low complexity).

The protein belongs to the herpesviridae ICP4 family. Forms homodimers. Interacts with transcriptional regulator ICP27; this interaction is required for proper incorporation of ICP4 into virions. Interacts with host TBP and host TAF1; these interactions help the stabilization of the pre-nitiation complex on specific promoters. Interacts with host GTF2B. In terms of processing, ADP-ribosylated. Post-translationally, the long stretch of Ser is a major site of phosphorylation. Only the phosphorylated forms are capable of interacting with beta or gamma genes.

It is found in the host nucleus. The protein resides in the host cytoplasm. It localises to the virion tegument. Functionally, plays an essential role in the regulation of viral gene expression by both activating and repressing host RNA polymerase II-mediated transcription. Binds with high affinity to the sequence 5'-ATCGTC-3'. Activates transcription by recruiting a form of the host TFIID to promoters and stabilizing the pre-initiation complex formation. Negatively regulates its own transcription. This immediate early (IE) protein is absolutely necessary for the transition from IE transcription to later viral gene transcription. This chain is Major viral transcription factor ICP4 (ICP4), found in Human herpesvirus 1 (strain 17) (HHV-1).